Reading from the N-terminus, the 416-residue chain is Probable protein phosphatase 2C 75 (416 aa).

Disordered stretches follow at residues 1–20 and 32–51; these read MTEI…SPTK and RRQA…DRTD. The PPM-type phosphatase domain maps to 108 to 411; it reads LYGIVSVMGR…DNISVVVIDL (304 aa). Mn(2+) contacts are provided by Asp-149, Gly-150, Asp-337, and Asp-402.

This sequence belongs to the PP2C family. It depends on Mg(2+) as a cofactor. Mn(2+) serves as cofactor.

The catalysed reaction is O-phospho-L-seryl-[protein] + H2O = L-seryl-[protein] + phosphate. It carries out the reaction O-phospho-L-threonyl-[protein] + H2O = L-threonyl-[protein] + phosphate. In terms of biological role, negative regulator of abscisic acid (ABA) responses during seed germination. This Arabidopsis thaliana (Mouse-ear cress) protein is Probable protein phosphatase 2C 75 (AHG1).